The primary structure comprises 493 residues: Voltage-gated potassium channel regulatory subunit KCNF1 (493 aa).

Residues 1-183 (MDASAEQSLP…KPESSCPARV (183 aa)) are Cytoplasmic-facing. The helical transmembrane segment at 184–204 (VAVLSFLLILVSSVVMCMGTI) threads the bilayer. A helical membrane pass occupies residues 224–244 (NVETACIGWFTLEYLLRLFSS). At 245–249 (PNKLH) the chain is on the cytoplasmic side. A helical membrane pass occupies residues 250–270 (FALSFMNIVDVLAILPFYVSL). Residues 290–310 (QALRIMRIARIFKLARHSSGL) traverse the membrane as a helical; Voltage-sensor segment. Residues 311–324 (QTLTYALKRSFKEL) lie on the Cytoplasmic side of the membrane. The helical transmembrane segment at 325–345 (GLLLMYLAVGIFVFSALGYTM) threads the bilayer. The pore-forming intramembrane region spans 358 to 378 (PQSFWWAIITMTTVGYGDIYP). A Selectivity filter motif is present at residues 370–375 (TVGYGD). Residues 386–406 (NAAISFLCGVIAIALPIHPII) form a helical membrane-spanning segment. The Cytoplasmic segment spans residues 407 to 493 (NNFVRYYNKQ…HHRTRLQSCK (87 aa)). Residues 434–468 (SSSAEGKPGGSRSDLDTLPPEPAAREGPSWGSRLK) are disordered.

It belongs to the potassium channel family. F (TC 1.A.1.2) subfamily. Kv5.1/KCNF1 sub-subfamily. As to quaternary structure, heterotetramer with KCNB1 or KCNB2.

It is found in the cell membrane. In terms of biological role, regulatory alpha-subunit of the voltage-gated potassium (Kv) channel which, when coassembled with KCNB1 or KCNB2, can modulate their expression and their gating kinetics by acting on deactivation upon repolarization and inactivation during maintained depolarization. Accelerates inactivation but has relatively little effect on deactivation. Coexpression with KCNB1 or KCNB2 markedly slows inactivation. Each modulatory subunit has its own specific properties of regulation, and can lead to extensive inhibitions, to large changes in kinetics, and/or to large shifts in the voltage dependencies of the inactivation process. The gating kinetics depends on the nature and stoichiometry of the associated regulatory sunbunit. Fails to produce a potassium current when expressed alone. The protein is Voltage-gated potassium channel regulatory subunit KCNF1 of Mus musculus (Mouse).